The primary structure comprises 97 residues: Small ribosomal subunit protein bS20 (97 aa).

Belongs to the bacterial ribosomal protein bS20 family.

Its function is as follows. Binds directly to 16S ribosomal RNA. The sequence is that of Small ribosomal subunit protein bS20 from Prochlorococcus marinus (strain MIT 9215).